Reading from the N-terminus, the 99-residue chain is Small ribosomal subunit protein bS20 (99 aa).

The protein belongs to the bacterial ribosomal protein bS20 family.

Its function is as follows. Binds directly to 16S ribosomal RNA. The sequence is that of Small ribosomal subunit protein bS20 from Cyanothece sp. (strain PCC 7425 / ATCC 29141).